The sequence spans 478 residues: Alcohol dehydrogenase (quinone), cytochrome c subunit (478 aa).

Residues 1-36 (MLNALTRDRLVSEMKQGWKLAAAIGLMAVSFGAAHA) form the signal peptide. Gln-37 bears the Pyrrolidone carboxylic acid mark. 3 consecutive Cytochrome c domains span residues 42 to 145 (ALIK…MHGV), 189 to 304 (PEVA…KSMP), and 327 to 417 (GQGN…RKGW). Heme c-binding residues include Cys-56, Cys-59, His-60, Cys-204, Cys-207, His-208, Cys-340, Cys-343, and His-344.

As to quaternary structure, the alcohol dehydrogenase multicomponent enzyme system is composed of a dehydrogenase subunit I (AdhA), a cytochrome c subunit II (AdhB) and a subunit III (AdhS). Requires heme c as cofactor.

Its subcellular location is the cell membrane. It carries out the reaction ethanol + a ubiquinone = a ubiquinol + acetaldehyde. Its activity is regulated as follows. 2,6-dichloro-4-dicyanovinylphenol (PC16) and antimycin A inhibit ubiquinol oxidation activity more selectively than the ubiquinone reductase activity. Functionally, cytochrome c component of the alcohol dehydrogenase multicomponent enzyme system which is involved in the production of acetic acid and in the ethanol oxidase respiratory chain. Quinohemoprotein alcohol dehydrogenase (ADH) catalyzes the oxidation of ethanol to acetaldehyde by transferring electrons to the ubiquinone embedded in the membrane phospholipids. The electrons transfer from ethanol to membranous ubiquinone occurs from pyrroloquinoline quinone (PQQ) to one heme c in subunit I (AdhA), and finally to two heme c in subunit II (AdhB). Besides ubiquinone reduction, ADH also has a ubiquinol (QH2) oxidation reaction which mediates electron transfer from ubiquinol to the non-energy generating bypass oxidase system. The electrons transfer occurs from ubiquinol (QH2) to the additional heme c within subunit II (AdhB). Also able to use quinone analogs such as 2,3-dimethoxy-5-methyl-6-n-decyl-1,4-benzoquinone (DB) and 2,3-dimethoxy-5-methyl-6-n-pentyl-1,4-benzoquinone (PB). The protein is Alcohol dehydrogenase (quinone), cytochrome c subunit of Gluconobacter oxydans (strain 621H) (Gluconobacter suboxydans).